The following is a 1096-amino-acid chain: DNA-directed RNA polymerase subunit beta (1096 aa).

Positions 1069-1096 are disordered; that stretch reads DLMQDVNPRRSTPSRPTYESLGSDYQED.

Belongs to the RNA polymerase beta chain family. In terms of assembly, in cyanobacteria the RNAP catalytic core is composed of 2 alpha, 1 beta, 1 beta', 1 gamma and 1 omega subunit. When a sigma factor is associated with the core the holoenzyme is formed, which can initiate transcription.

It carries out the reaction RNA(n) + a ribonucleoside 5'-triphosphate = RNA(n+1) + diphosphate. DNA-dependent RNA polymerase catalyzes the transcription of DNA into RNA using the four ribonucleoside triphosphates as substrates. The polypeptide is DNA-directed RNA polymerase subunit beta (Prochlorococcus marinus (strain SARG / CCMP1375 / SS120)).